A 78-amino-acid polypeptide reads, in one-letter code: U29-theraphotoxin-Cg1a (78 aa).

The N-terminal stretch at 1 to 19 (MRYQTVFWILLIALCTVNP) is a signal peptide. Cystine bridges form between Cys42–Cys56, Cys49–Cys60, Cys55–Cys77, and Cys67–Cys73.

It belongs to the neurotoxin 13 (insecticidal toxin ABC) family. 03 (JZTX-59) subfamily. Expressed by the venom gland.

It is found in the secreted. Probable ion channel inhibitor. In Chilobrachys guangxiensis (Chinese earth tiger tarantula), this protein is U29-theraphotoxin-Cg1a.